Reading from the N-terminus, the 184-residue chain is Peptidyl-tRNA hydrolase (184 aa).

Tyr-17 is a binding site for tRNA. Residue His-22 is the Proton acceptor of the active site. Residues Phe-71, Asn-73, and Asn-119 each coordinate tRNA.

The protein belongs to the PTH family. Monomer.

The protein localises to the cytoplasm. It carries out the reaction an N-acyl-L-alpha-aminoacyl-tRNA + H2O = an N-acyl-L-amino acid + a tRNA + H(+). In terms of biological role, hydrolyzes ribosome-free peptidyl-tRNAs (with 1 or more amino acids incorporated), which drop off the ribosome during protein synthesis, or as a result of ribosome stalling. Functionally, catalyzes the release of premature peptidyl moieties from peptidyl-tRNA molecules trapped in stalled 50S ribosomal subunits, and thus maintains levels of free tRNAs and 50S ribosomes. In Corynebacterium diphtheriae (strain ATCC 700971 / NCTC 13129 / Biotype gravis), this protein is Peptidyl-tRNA hydrolase.